The chain runs to 983 residues: Polyhomeotic-like protein 3 (983 aa).

Disordered regions lie at residues 1–34, 103–149, 225–283, 313–332, 339–410, 477–509, and 601–620; these read MDTE…MQQP, LSSG…SSTS, VLSS…TAVT, LHSP…QQQQ, LQNS…SQSP, PGQQ…STSP, and DECV…PAAI. Composition is skewed to low complexity over residues 9–29 and 103–126; these read TSSV…TSSS and LSSG…SQTS. Residues 127-139 are compositionally biased toward polar residues; that stretch reads INLSTSPTPAQLI. The segment covering 140–149 has biased composition (low complexity); it reads SRSQASSSTS. Polar residues predominate over residues 225 to 257; the sequence is VLSSSQNGPPKSTSQTQSLTICHNKTTVTSSKI. Positions 258-271 are enriched in basic and acidic residues; sequence SQRDPSPESNKKGE. Phosphoserine occurs at positions 263 and 272. Over residues 274 to 283 the composition is skewed to polar residues; that stretch reads SLESRSTAVT. Serine 315 carries the phosphoserine modification. Positions 365–383 are enriched in polar residues; the sequence is SNAQSQHCSPIQSHPSPLT. Over residues 384-398 the composition is skewed to low complexity; the sequence is VSPNQSQSAQQSVVV. The segment covering 477–489 has biased composition (polar residues); it reads PGQQIVSPSHQQY. Residues 490 to 506 are compositionally biased toward low complexity; it reads SSLQSSPIPIASPPQMS. Residues threonine 609 and threonine 614 each carry the phosphothreonine modification. At serine 616 the chain carries Phosphoserine. Glycyl lysine isopeptide (Lys-Gly) (interchain with G-Cter in SUMO2) cross-links involve residues lysine 691 and lysine 732. Residues 691 to 720 carry the HD1 motif; that stretch reads KPPQAIVKPQILTHVIEGFVIQEGLEPFPV. Serine 761 and serine 762 each carry phosphoserine. Residues 776–810 form an FCS-type zinc finger; sequence EEMDSELLKCEFCGKMGYANEFLRSKRFCTMSCAK. Cysteine 785, cysteine 788, cysteine 804, and cysteine 808 together coordinate Zn(2+). Residue lysine 810 forms a Glycyl lysine isopeptide (Lys-Gly) (interchain with G-Cter in SUMO2) linkage. Disordered regions lie at residues 827 to 847 and 864 to 889; these read RKPD…PDGA and EEDL…SERE. In terms of domain architecture, SAM spans 919-983; the sequence is WTVDDVWAFI…CARINSLKES (65 aa).

As to quaternary structure, component of a PRC1-like complex.

The protein localises to the nucleus. Functionally, component of a Polycomb group (PcG) multiprotein PRC1-like complex, a complex class required to maintain the transcriptionally repressive state of many genes, including Hox genes, throughout development. PcG PRC1 complex acts via chromatin remodeling and modification of histones; it mediates monoubiquitination of histone H2A 'Lys-119', rendering chromatin heritably changed in its expressibility. This Homo sapiens (Human) protein is Polyhomeotic-like protein 3 (PHC3).